A 242-amino-acid polypeptide reads, in one-letter code: Type III pantothenate kinase (242 aa).

6–13 (DAGNTRLK) contacts ATP. Substrate contacts are provided by residues tyrosine 90 and 97 to 100 (GADR). Aspartate 99 functions as the Proton acceptor in the catalytic mechanism. Aspartate 119 contacts K(+). Residue serine 122 coordinates ATP. Threonine 174 is a substrate binding site.

The protein belongs to the type III pantothenate kinase family. In terms of assembly, homodimer. The cofactor is NH4(+). It depends on K(+) as a cofactor.

The protein localises to the cytoplasm. It catalyses the reaction (R)-pantothenate + ATP = (R)-4'-phosphopantothenate + ADP + H(+). It participates in cofactor biosynthesis; coenzyme A biosynthesis; CoA from (R)-pantothenate: step 1/5. Its function is as follows. Catalyzes the phosphorylation of pantothenate (Pan), the first step in CoA biosynthesis. The protein is Type III pantothenate kinase of Marinobacter nauticus (strain ATCC 700491 / DSM 11845 / VT8) (Marinobacter aquaeolei).